Reading from the N-terminus, the 270-residue chain is MKMTSKKMKDELMKKLSRPEWDFHYDSEKEVLRIEQKDSKKGINVSLPGVVAKWEVNKEKAIEEVAYYVQEALIAMHKEENSAAKILPVIRSTSFPKQAEEGNPFIMTDHTAETRIYYALDSNKTYRLIDERLLQKLGLTEKQVREMALFNARSLGYEFKQDTVAGNTFYFLNTNDGYDATRILNESLLQSMREKISGDMVVAVPHQDVLIIADIVNEIGYDIIAQMTMKFFAEGHVPITSLSFVYEDGDFEPIFILAKNRKKTDGKEKG.

This sequence belongs to the UPF0354 family.

The chain is UPF0354 protein BA_4944/GBAA_4944/BAS4588 from Bacillus anthracis.